We begin with the raw amino-acid sequence, 157 residues long: uncharacterized protein (157 aa).

The stretch at 36–63 (QIEELNELCQFFNISLTYTRESLEELEN) forms a coiled coil.

This is an uncharacterized protein from Bacillus subtilis (strain 168).